Consider the following 228-residue polypeptide: MAKDTTGRLHVQVKTGGKRKLSSKLWLERQLNDPYVAKAKAAGYRSRAAFKLLEIDDKFRLLKHGMAVVDLGAAPGGWSQIAAKRVGSVDGKGKVVAIDLLEMPEIAGVEFAQLDFMDNDAPAKLTAMLGGGADVVMSDMAANTTGHRKTDQLRIVGLIETAAAFACDVLKPGGTFLAKTFQSGADADLLAQLKRDFATVRHVKPAASRQDSSERYVLATGFRGGAKA.

S-adenosyl-L-methionine is bound by residues G76, W78, D99, D115, and D139. K179 functions as the Proton acceptor in the catalytic mechanism.

This sequence belongs to the class I-like SAM-binding methyltransferase superfamily. RNA methyltransferase RlmE family.

Its subcellular location is the cytoplasm. The enzyme catalyses uridine(2552) in 23S rRNA + S-adenosyl-L-methionine = 2'-O-methyluridine(2552) in 23S rRNA + S-adenosyl-L-homocysteine + H(+). Functionally, specifically methylates the uridine in position 2552 of 23S rRNA at the 2'-O position of the ribose in the fully assembled 50S ribosomal subunit. The chain is Ribosomal RNA large subunit methyltransferase E from Bradyrhizobium diazoefficiens (strain JCM 10833 / BCRC 13528 / IAM 13628 / NBRC 14792 / USDA 110).